The following is a 352-amino-acid chain: Photosystem II D2 protein (352 aa).

The Cytoplasmic segment spans residues 1–31; it reads MTIAIGRAPAERGWFDILDDWLKRDRFVFVG. A helical transmembrane segment spans residues 32-53; sequence WSGILLFPCAYLALGGWLTGTT. The Lumenal segment spans residues 54 to 108; that stretch reads FVTSWYTHGLASSYLEGCNFLTVAVSTPANSMGHSLLLLWGPEAQGDFTRWCQLG. Residues 109–131 form a helical membrane-spanning segment; sequence GLWTFIALHGAFGLIGFMLRQFE. Chlorophyll a is bound at residue H117. Pheophytin a is bound at residue Q129. The Cytoplasmic segment spans residues 132-140; the sequence is IARLVGVRP. A helical transmembrane segment spans residues 141 to 160; sequence YNAIAFSAPIAVFVSVFLIY. N142 provides a ligand contact to pheophytin a. At 161 to 193 the chain is on the lumenal side; that stretch reads PLGQSSWFFAPSFGVAAIFRFLLFFQGFHNWTL. The helical transmembrane segment at 194-217 threads the bilayer; sequence NPFHMMGVAGVLGGALLCAIHGAT. H197 serves as a coordination point for chlorophyll a. Residues H214 and F261 each coordinate a plastoquinone. A Fe cation-binding site is contributed by H214. Over 218 to 265 the chain is Cytoplasmic; the sequence is VENTLFQDGEGASTFRAFNPTQAEETYSMVTANRFWSQIFGIAFSNKR. Residues 266 to 288 form a helical membrane-spanning segment; sequence WLHFFMLFVPVTGLWMSAIGVVG. H268 serves as a coordination point for Fe cation. The Lumenal portion of the chain corresponds to 289 to 352; sequence LALNLRSYDF…EEVLPRGNAL (64 aa).

It belongs to the reaction center PufL/M/PsbA/D family. PSII is composed of 1 copy each of membrane proteins PsbA, PsbB, PsbC, PsbD, PsbE, PsbF, PsbH, PsbI, PsbJ, PsbK, PsbL, PsbM, PsbT, PsbX, PsbY, PsbZ, Psb30/Ycf12, peripheral proteins PsbO, CyanoQ (PsbQ), PsbU, PsbV and a large number of cofactors. It forms dimeric complexes. Part of a photosystem II (PSII) assembly intermediate complex PSII-I; crystallized from a strain deleted of psbJ, it forms monomeric PSII before addition of the oxygen evolving complex. PSII-I includes 3 assembly factors not found in mature PSII (Psb27, Psb28 and Psb34). The D1/D2 heterodimer binds P680, chlorophylls that are the primary electron donor of PSII, and subsequent electron acceptors. It shares a non-heme iron and each subunit binds pheophytin, quinone, additional chlorophylls, carotenoids and lipids. There is also a Cl(-1) ion associated with D1 and D2, which is required for oxygen evolution. PSII binds additional chlorophylls, carotenoids and specific lipids. is required as a cofactor.

It is found in the cellular thylakoid membrane. The enzyme catalyses 2 a plastoquinone + 4 hnu + 2 H2O = 2 a plastoquinol + O2. Functionally, photosystem II (PSII) is a light-driven water:plastoquinone oxidoreductase that uses light energy to abstract electrons from H(2)O, generating O(2) and a proton gradient subsequently used for ATP formation. It consists of a core antenna complex that captures photons, and an electron transfer chain that converts photonic excitation into a charge separation. The D1/D2 (PsbA/PsbD) reaction center heterodimer binds P680, the primary electron donor of PSII as well as several subsequent electron acceptors. D2 is needed for assembly of a stable PSII complex. The sequence is that of Photosystem II D2 protein from Thermosynechococcus vestitus (strain NIES-2133 / IAM M-273 / BP-1).